Here is a 190-residue protein sequence, read N- to C-terminus: Large ribosomal subunit protein bL25 (190 aa).

It belongs to the bacterial ribosomal protein bL25 family. CTC subfamily. Part of the 50S ribosomal subunit; part of the 5S rRNA/L5/L18/L25 subcomplex. Contacts the 5S rRNA. Binds to the 5S rRNA independently of L5 and L18.

Functionally, this is one of the proteins that binds to the 5S RNA in the ribosome where it forms part of the central protuberance. In Neisseria meningitidis serogroup C (strain 053442), this protein is Large ribosomal subunit protein bL25.